We begin with the raw amino-acid sequence, 462 residues long: tRNA-2-methylthio-N(6)-dimethylallyladenosine synthase (462 aa).

In terms of domain architecture, MTTase N-terminal spans 18 to 138 (RKVFVKTYGC…LPNALARVRS (121 aa)). C27, C63, C101, C179, C183, and C186 together coordinate [4Fe-4S] cluster. The 233-residue stretch at 165–397 (RKRGVSAFLT…QALLSEQQYA (233 aa)) folds into the Radical SAM core domain. A TRAM domain is found at 400 to 462 (DSMIGREMDV…TNSLIAQKLA (63 aa)).

This sequence belongs to the methylthiotransferase family. MiaB subfamily. Monomer. [4Fe-4S] cluster is required as a cofactor.

Its subcellular location is the cytoplasm. The catalysed reaction is N(6)-dimethylallyladenosine(37) in tRNA + (sulfur carrier)-SH + AH2 + 2 S-adenosyl-L-methionine = 2-methylsulfanyl-N(6)-dimethylallyladenosine(37) in tRNA + (sulfur carrier)-H + 5'-deoxyadenosine + L-methionine + A + S-adenosyl-L-homocysteine + 2 H(+). Functionally, catalyzes the methylthiolation of N6-(dimethylallyl)adenosine (i(6)A), leading to the formation of 2-methylthio-N6-(dimethylallyl)adenosine (ms(2)i(6)A) at position 37 in tRNAs that read codons beginning with uridine. The chain is tRNA-2-methylthio-N(6)-dimethylallyladenosine synthase from Brucella anthropi (strain ATCC 49188 / DSM 6882 / CCUG 24695 / JCM 21032 / LMG 3331 / NBRC 15819 / NCTC 12168 / Alc 37) (Ochrobactrum anthropi).